The sequence spans 332 residues: Anthranilate phosphoribosyltransferase (332 aa).

5-phospho-alpha-D-ribose 1-diphosphate contacts are provided by residues Gly-79, 82 to 83, Ser-87, 89 to 92, 107 to 115, and Ser-119; these read GD, NIST, and KHGNRSVSS. Gly-79 contacts anthranilate. A Mg(2+)-binding site is contributed by Ser-91. Asn-110 lines the anthranilate pocket. Position 165 (Arg-165) interacts with anthranilate. The Mg(2+) site is built by Asp-223 and Glu-224.

Belongs to the anthranilate phosphoribosyltransferase family. Homodimer. Mg(2+) serves as cofactor.

The enzyme catalyses N-(5-phospho-beta-D-ribosyl)anthranilate + diphosphate = 5-phospho-alpha-D-ribose 1-diphosphate + anthranilate. It functions in the pathway amino-acid biosynthesis; L-tryptophan biosynthesis; L-tryptophan from chorismate: step 2/5. In terms of biological role, catalyzes the transfer of the phosphoribosyl group of 5-phosphorylribose-1-pyrophosphate (PRPP) to anthranilate to yield N-(5'-phosphoribosyl)-anthranilate (PRA). This chain is Anthranilate phosphoribosyltransferase, found in Sodalis glossinidius (strain morsitans).